Consider the following 130-residue polypeptide: Small ribosomal subunit protein uS9 (130 aa).

This sequence belongs to the universal ribosomal protein uS9 family.

This is Small ribosomal subunit protein uS9 from Desulfosudis oleivorans (strain DSM 6200 / JCM 39069 / Hxd3) (Desulfococcus oleovorans).